The primary structure comprises 710 residues: Solute carrier organic anion transporter family member 3A1 (710 aa).

Met1 is modified (N-acetylmethionine). The span at 1–15 (MQGKKPGGSSGGGRS) shows a compositional bias: gly residues. The disordered stretch occupies residues 1–25 (MQGKKPGGSSGGGRSGELQGDEAQR). Residues 1–40 (MQGKKPGGSSGGGRSGELQGDEAQRNKKKKKKVSCFSNIK) lie on the Cytoplasmic side of the membrane. A helical membrane pass occupies residues 41–60 (IFLVSECALMLAQGTVGAYL). Residues 61–79 (VSVLTTLERRFNLQSADVG) are Extracellular-facing. The chain crosses the membrane as a helical span at residues 80-100 (VIASSFEIGNLALILFVSYFG). Residues 101-106 (ARGHRP) lie on the Cytoplasmic side of the membrane. Residues 107 to 131 (RLIGCGGIVMALGALLSALPEFLTH) traverse the membrane as a helical segment. The Extracellular segment spans residues 132-174 (QYKYEAGEIRWGAEGRDVCATNGSSSDEGPDPDLICRNRTATN). Residues Asn153 and Asn169 are each glycosylated (N-linked (GlcNAc...) asparagine). Residues 175 to 203 (MMYLLLIGAQVLLGIGATPVQPLGVSYID) traverse the membrane as a helical segment. Residues 204 to 222 (DHVRRKDSSLYIGILFTML) lie on the Cytoplasmic side of the membrane. Residues 223–243 (VFGPACGFILGSFCTKIYVDA) traverse the membrane as a helical segment. Topologically, residues 244 to 261 (VFIDTSNLDITPDDPRWI) are extracellular. Residues 262-286 (GAWWGGFLLCGALLFFSSLLMFGFP) form a helical membrane-spanning segment. Over 287–344 (QSLPPHSDPGMESEQAMLPEREYERPKPSNGVLRHPLEPDSSASCFQQLRVIPKVTKH) the chain is Cytoplasmic. Residues 345-366 (LLSNPVFTCIVLAACMEIAVVA) traverse the membrane as a helical segment. The Extracellular segment spans residues 367–386 (GFAAFLGKYLEQQFNLTTSS). Asn381 is a glycosylation site (N-linked (GlcNAc...) asparagine). A helical transmembrane segment spans residues 387-410 (ANQLLGMTAIPCACLGIFLGGLLV). Topologically, residues 411–414 (KKLS) are cytoplasmic. Residues 415-438 (LSALGAIRMAMLVNLVSTACYVSF) traverse the membrane as a helical segment. Topologically, residues 439 to 539 (LFLGCDTGPV…PGCQEAFLTF (101 aa)) are extracellular. A glycan (N-linked (GlcNAc...) asparagine) is linked at Asn457. The region spanning 465–513 (LDPYSPCNNNCECQTDSFTPVCGADGITYLSACFAGCNSTNLTGCACLT) is the Kazal-like domain. Intrachain disulfides connect Cys471–Cys497, Cys475–Cys486, and Cys477–Cys501. Asn502, Asn505, and Asn519 each carry an N-linked (GlcNAc...) asparagine glycan. The helical transmembrane segment at 540–562 (LCVMCVCSLIGAMAQTPSVIILI) threads the bilayer. Residues 563-571 (RTVSPELKS) are Cytoplasmic-facing. Residues 572–597 (YALGVLFLLLRLLGFIPPPLIFGAGI) traverse the membrane as a helical segment. The Extracellular segment spans residues 598–630 (DSTCLFWSTFCGEQGACVLYDNVVYRYLYVSIA). Residues 631–648 (IALKSFAFILYTTTWQCL) form a helical membrane-spanning segment. The Cytoplasmic portion of the chain corresponds to 649–705 (RKNYKRYIKNHEGGLSTSEFFASTLTLDNLGRDPVPAHQTHRTKFIYNLEDHEWCEN).

Belongs to the organo anion transporter (TC 2.A.60) family. In terms of tissue distribution, widely expressed.

Its subcellular location is the basolateral cell membrane. It localises to the apical cell membrane. The protein resides in the basal cell membrane. The enzyme catalyses L-thyroxine(out) = L-thyroxine(in). It catalyses the reaction prostaglandin E1(out) = prostaglandin E1(in). The catalysed reaction is prostaglandin E2(out) = prostaglandin E2(in). It carries out the reaction prostaglandin F2alpha(out) = prostaglandin F2alpha(in). The enzyme catalyses (5Z,8Z,11Z,14Z)-eicosatetraenoate(out) = (5Z,8Z,11Z,14Z)-eicosatetraenoate(in). It catalyses the reaction taurocholate(out) = taurocholate(in). The catalysed reaction is glycocholate(out) = glycocholate(in). It carries out the reaction estrone 3-sulfate(out) = estrone 3-sulfate(in). The enzyme catalyses argipressin(out) = argipressin(in). Its function is as follows. Putative organic anion antiporter with apparent broad substrate specificity. Recognizes various substrates including thyroid hormone L-thyroxine, prostanoids such as prostaglandin E1 and E2, bile acids such as taurocholate, glycolate and glycochenodeoxycholate and peptide hormones such as L-arginine vasopressin, likely operating in a tissue-specific manner. The transport mechanism, its electrogenicity and potential tissue-specific counterions remain to be elucidated. This is Solute carrier organic anion transporter family member 3A1 (Slco3a1) from Mus musculus (Mouse).